Consider the following 528-residue polypeptide: UDP-glucuronosyltransferase 1A9 (528 aa).

The signal sequence occupies residues Met-1–Ala-23. Residue Asn-69 is glycosylated (N-linked (GlcNAc...) asparagine). Lys-97 is subject to N6-succinyllysine. 2 N-linked (GlcNAc...) asparagine glycosylation sites follow: Asn-290 and Asn-428. A helical membrane pass occupies residues Val-486–Ala-506.

Belongs to the UDP-glycosyltransferase family. Homodimer. Homooligomer. Interacts with UGT1A1, UGT1A3, UGT1A4, UGT1A6, UGT1A7, UGT1A8 and UGT1A10 to form heterodimers. In terms of tissue distribution, highly expressed in liver and at lower levels in stomach and kidney.

The protein resides in the endoplasmic reticulum membrane. It carries out the reaction glucuronate acceptor + UDP-alpha-D-glucuronate = acceptor beta-D-glucuronoside + UDP + H(+). The enzyme catalyses 2-hydroxy-17beta-estradiol + UDP-alpha-D-glucuronate = 2-hydroxy-17beta-estradiol 3-O-(beta-D-glucuronate) + UDP + H(+). The catalysed reaction is 4-hydroxy-17beta-estradiol + UDP-alpha-D-glucuronate = 17beta-estradiol 4-O-(beta-D-glucuronate) + UDP + H(+). It catalyses the reaction 2-hydroxyestrone + UDP-alpha-D-glucuronate = 2-hydroxyestrone 3-O-(beta-D-glucuronate) + UDP + H(+). It carries out the reaction 4-hydroxyestrone + UDP-alpha-D-glucuronate = estrone 4-O-(beta-D-glucuronate) + UDP + H(+). The enzyme catalyses prunetin + UDP-alpha-D-glucuronate = prunetin-5-O-beta-D-glucuronide + UDP. The catalysed reaction is 8-iso-prostaglandin F2alpha + UDP-alpha-D-glucuronate = 8-iso-prostaglandin F2alpha-glucuronide + UDP + H(+). It catalyses the reaction 5-epi-5-F2t-IsoP + UDP-alpha-D-glucuronate = 5-epi-5-F2t-IsoP-glucuronide + UDP + H(+). It carries out the reaction (5Z,8Z,11Z,14Z)-eicosatetraenoate + UDP-alpha-D-glucuronate = O-[(5Z),(8Z),(11Z),(14Z)-eicosatetraenoyl]-beta-D-glucuronate + UDP. The enzyme catalyses 15-hydroxy-(5Z,8Z,11Z,13E)-eicosatetraenoate + UDP-alpha-D-glucuronate = 15-O-(beta-D-glucuronosyl)-(5Z,8Z,11Z,14Z)-eicosatetraenoate + UDP + H(+). The catalysed reaction is prostaglandin B1 + UDP-alpha-D-glucuronate = 15-O-(beta-D-glucuronosyl)-prostaglandin B1 + UDP + H(+). It catalyses the reaction (E)-ferulate + UDP-alpha-D-glucuronate = (E)-4-O-(beta-D-glucuronosyl)-ferulate + UDP + H(+). It carries out the reaction (E)-ferulate + UDP-alpha-D-glucuronate = (E)-ferulic acid beta-D-glucuronate ester + UDP. The enzyme catalyses candesartan + UDP-alpha-D-glucuronate = candesartan O-beta-D-glucuronoside + UDP. The catalysed reaction is SN-38 + UDP-alpha-D-glucuronate = SN-38 O-beta-D-glucuronide + UDP + H(+). It catalyses the reaction mycophenolate + UDP-alpha-D-glucuronate = mycophenolate 7-O-beta-D-glucuronide + UDP + H(+). UDP-glucuronosyltransferase (UGT) that catalyzes phase II biotransformation reactions in which lipophilic substrates are conjugated with glucuronic acid to increase the metabolite's water solubility, thereby facilitating excretion into either the urine or bile. Essential for the elimination and detoxification of drugs, xenobiotics and endogenous compounds. Catalyzes the glucuronidation of endogenous estrogen hormones such as estradiol and estrone. Involved in the glucuronidation of arachidonic acid (AA) and AA-derived eicosanoids including 15-HETE, PGB1 and F2-isoprostanes (8-iso-PGF2alpha and 5-epi-5-F2t-IsoP). Glucuronates the phytochemical ferulic acid efficently at both the phenolic or the carboxylic acid group. Also catalyzes the glucuronidation of the isoflavones genistein, daidzein, glycitein, formononetin, biochanin A and prunetin, which are phytoestrogens with anticancer and cardiovascular properties. Involved in the glucuronidation of the AGTR1 angiotensin receptor antagonist caderastan, a drug which can inhibit the effect of angiotensin II. Involved in the biotransformation of 7-ethyl-10-hydroxycamptothecin (SN-38), the pharmacologically active metabolite of the anticancer drug irinotecan. Also metabolizes mycophenolate, an immunosuppressive agent. In Mus musculus (Mouse), this protein is UDP-glucuronosyltransferase 1A9.